The sequence spans 127 residues: Prophage antitermination protein Q homolog QuuD (127 aa).

The protein belongs to the phage antitermination Q type 1 family.

Functionally, positively regulate expression of some phage genes. Bacterial host RNA polymerase modified by antitermination proteins transcribes through termination sites that otherwise prevent expression of the regulated genes. This chain is Prophage antitermination protein Q homolog QuuD (quuD), found in Escherichia coli (strain K12).